We begin with the raw amino-acid sequence, 118 residues long: MNALNQAHCEACRADAPKVSDDELAELILQIPDWNIEVRDGHMELERVFLFKNFKHALAFTNAIGEIAEAEGHHPGLLTEWGKVTVTWWSHSIKGLHRNDFIMCARTDEVAKTAEGRK.

Belongs to the pterin-4-alpha-carbinolamine dehydratase family.

The catalysed reaction is (4aS,6R)-4a-hydroxy-L-erythro-5,6,7,8-tetrahydrobiopterin = (6R)-L-erythro-6,7-dihydrobiopterin + H2O. This chain is Putative pterin-4-alpha-carbinolamine dehydratase, found in Pseudomonas entomophila (strain L48).